Consider the following 655-residue polypeptide: Epithelial sodium channel subunit gamma (655 aa).

Residues Met1 to Leu55 are Cytoplasmic-facing. Residues Trp56–Phe76 form a helical membrane-spanning segment. Residues Ser77–Cys547 lie on the Extracellular side of the membrane. 8 cysteine pairs are disulfide-bonded: Cys100/Cys289, Cys213/Cys220, Cys266/Cys273, Cys378/Cys463, Cys400/Cys459, Cys404/Cys455, Cys413/Cys440, and Cys415/Cys429. The gating release of inhibition by proteolysis (GRIP); protease-sensitive region that is responsible for the proteolytic activation of the channel stretch occupies residues Arg140–Ser227. An N-linked (GlcNAc...) asparagine glycan is attached at Asn215. Asn277 carries an N-linked (GlcNAc...) asparagine glycan. N-linked (GlcNAc...) asparagine glycosylation is present at Asn503. A helical membrane pass occupies residues Ser548–Ala568. Topologically, residues Arg569–Phe655 are cytoplasmic. The disordered stretch occupies residues Arg582–Leu636. Residues Pro585 to Asp598 are compositionally biased toward polar residues. Residues Pro618–Arg632 are compositionally biased toward pro residues. The PY motif; recruits WW domain-containing proteins and is thereby required for ubiquitination and inhibition of the channel by NEDD4 and NEDD4L motif lies at Pro629 to Tyr633.

Belongs to the amiloride-sensitive sodium channel (TC 1.A.6) family. SCNN1G subfamily. Component of the heterotrimeric epithelial sodium channel (ENaC) composed of an alpha/SCNN1A, a beta/SCNN1B and a gamma/SCNN1G subunit. Interacts with WWP1 (via WW domains). Interacts with WWP2 (via WW domains); inhibits the channel. Interacts with the full-length immature form of PCSK9 (pro-PCSK9); inhibits ENaC by promoting its proteasomal degradation. Interacts with BPIFA1; the interaction is indirect via SCNN1B and inhibits the proteolytic maturation of SCNN1A and SCNN1G and the activation of ENaC. In terms of processing, phosphorylated on serine and threonine residues. Aldosterone and insulin increase the basal level of phosphorylation. Post-translationally, ubiquitinated. Can be ubiquitinated at multiple sites and undergo monoubiquitination and polyubiquitination. Ubiquitination by NEDD4 or NEDD4L inhibits the ENaC channel through endocytosis, intracellular retention and degradation of its individual subunits. ENaC is activated through the proteolytic maturation of its subunits. Furin cleaves the SCNN1G subunit first, followed by cleavage by prostasin (PRSS8), which results in a stepwise increase in the open probability of the channel due to the release of an inhibitory tract. BPIFA1, which is recruited by the SCNN1B subunit, prevents the proteolytic activation of ENaC. In terms of processing, N-glycosylated. N-linked glycans are processed to complex type during ENaC complex assembly and transport to the plasma membrane. Lung and kidney.

The protein localises to the apical cell membrane. The catalysed reaction is Na(+)(in) = Na(+)(out). With respect to regulation, originally identified and characterized by its inhibition by the diuretic drug amiloride. Its function is as follows. This is one of the three pore-forming subunits of the heterotrimeric epithelial sodium channel (ENaC), a critical regulator of sodium balance and fluid homeostasis. ENaC operates in epithelial tissues, where it mediates the electrodiffusion of sodium ions from extracellular fluid through the apical membrane of cells, with water following osmotically. It plays a key role in maintaining sodium homeostasis through electrogenic sodium reabsorption in the kidneys. Additionally, ENaC is essential for airway surface liquid homeostasis, which is crucial for proper mucus clearance. The protein is Epithelial sodium channel subunit gamma of Mus musculus (Mouse).